A 301-amino-acid chain; its full sequence is Small ribosomal subunit biogenesis GTPase RsgA (301 aa).

Residues 63-224 enclose the CP-type G domain; it reads INALVRPPIA…IADTPGFSSY (162 aa). GTP is bound by residues 112 to 115 and 167 to 175; these read SKAD and GQTGAGKST. Zn(2+) is bound by residues Cys-248, Cys-253, His-255, and Cys-261.

It belongs to the TRAFAC class YlqF/YawG GTPase family. RsgA subfamily. As to quaternary structure, monomer. Associates with 30S ribosomal subunit, binds 16S rRNA. It depends on Zn(2+) as a cofactor.

It localises to the cytoplasm. Its function is as follows. One of several proteins that assist in the late maturation steps of the functional core of the 30S ribosomal subunit. Helps release RbfA from mature subunits. May play a role in the assembly of ribosomal proteins into the subunit. Circularly permuted GTPase that catalyzes slow GTP hydrolysis, GTPase activity is stimulated by the 30S ribosomal subunit. This Leuconostoc citreum (strain KM20) protein is Small ribosomal subunit biogenesis GTPase RsgA.